A 660-amino-acid chain; its full sequence is Protein NEDD1 (660 aa).

WD repeat units follow at residues M1–H31, T32–L71, A75–S114, D117–P156, G160–N200, V204–T244, V246–K285, and A289–S332. A Phosphoserine modification is found at S325. The segment at Q369–S411 is disordered. A Phosphothreonine; by PLK1 modification is found at T382. S397 is modified (phosphoserine; by PLK1). Residue S411 is modified to Phosphoserine. S426 carries the phosphoserine; by PLK1 modification. Residues S468 and S516 each carry the phosphoserine modification. Over residues G507 to R523 the composition is skewed to polar residues. The segment at G507–E532 is disordered. Position 550 is a phosphothreonine; by CDK1 (T550). Position 637 is a phosphoserine; by PLK1 (S637).

In terms of assembly, interacts with FAM29A. Interacts with HSPA1A and HSPA1B. Interacts with gamma-tubulin in a HSPA1A/B-dependent manner. During mitosis, prior phosphorylation on Thr-550 by CDK1 promotes subsequent phosphorylation by PLK1 on Thr-382, Ser-397, Ser-426 and Ser-637. Phosphorylated NEDD1 can interact with gamma-tubulin for targeting the gamma-tubulin ring complex (gTuRC) to the centrosome, an important step for spindle formation.

It localises to the cytoplasm. The protein localises to the cytoskeleton. The protein resides in the microtubule organizing center. It is found in the centrosome. Required for mitosis progression. Promotes the nucleation of microtubules from the spindle. This is Protein NEDD1 (NEDD1) from Homo sapiens (Human).